Consider the following 342-residue polypeptide: S-adenosylmethionine:tRNA ribosyltransferase-isomerase (342 aa).

It belongs to the QueA family. In terms of assembly, monomer.

Its subcellular location is the cytoplasm. The catalysed reaction is 7-aminomethyl-7-carbaguanosine(34) in tRNA + S-adenosyl-L-methionine = epoxyqueuosine(34) in tRNA + adenine + L-methionine + 2 H(+). Its pathway is tRNA modification; tRNA-queuosine biosynthesis. Functionally, transfers and isomerizes the ribose moiety from AdoMet to the 7-aminomethyl group of 7-deazaguanine (preQ1-tRNA) to give epoxyqueuosine (oQ-tRNA). This is S-adenosylmethionine:tRNA ribosyltransferase-isomerase from Streptococcus pyogenes serotype M6 (strain ATCC BAA-946 / MGAS10394).